Reading from the N-terminus, the 148-residue chain is Arginine repressor (148 aa).

The protein belongs to the ArgR family.

It is found in the cytoplasm. It participates in amino-acid biosynthesis; L-arginine biosynthesis [regulation]. In terms of biological role, regulates arginine biosynthesis genes. The polypeptide is Arginine repressor (Chlorobium phaeovibrioides (strain DSM 265 / 1930) (Prosthecochloris vibrioformis (strain DSM 265))).